The following is a 275-amino-acid chain: Beta-lactamase OXA-2 (275 aa).

An N-terminal signal peptide occupies residues 1–21 (MAIRIFAILFSIFSLATFAHA). The active-site Acyl-ester intermediate is the Ser72. N6-carboxylysine is present on Lys75. A substrate-binding site is contributed by 210–212 (KTG).

It belongs to the class-D beta-lactamase family.

The catalysed reaction is a beta-lactam + H2O = a substituted beta-amino acid. This is an oxacillin-hydrolyzing beta-lactamase. This is Beta-lactamase OXA-2 (bla) from Escherichia coli.